We begin with the raw amino-acid sequence, 186 residues long: Large ribosomal subunit protein uL22 (186 aa).

The interval 159–186 is disordered; the sequence is KAAENEPAKKKLSKKKLQRQKEKMMRNE. The span at 177 to 186 shows a compositional bias: basic and acidic residues; the sequence is RQKEKMMRNE.

It belongs to the universal ribosomal protein uL22 family.

The chain is Large ribosomal subunit protein uL22 (RpL17) from Aedes albopictus (Asian tiger mosquito).